The sequence spans 499 residues: Cytochrome P450 81E8 (499 aa).

The helical transmembrane segment at 3–23 (TFYLSLIISLFFLIITLKVFF) threads the bilayer. Cys436 provides a ligand contact to heme.

This sequence belongs to the cytochrome P450 family. Heme serves as cofactor.

It localises to the membrane. Its function is as follows. Probable monooxygenases exhibiting no activity with isoflavones such as formononetin, biochanin A, pseudobaptigenin, daidzein, genistein, isoformononetin and prunetin, or with flavonoids including naringenin, liquiritigenin, apigenin, luteolin, or kaempferol. In Medicago truncatula (Barrel medic), this protein is Cytochrome P450 81E8.